The sequence spans 92 residues: DNA-directed RNA polymerase subunit omega (92 aa).

The protein belongs to the RNA polymerase subunit omega family. As to quaternary structure, the RNAP catalytic core consists of 2 alpha, 1 beta, 1 beta' and 1 omega subunit. When a sigma factor is associated with the core the holoenzyme is formed, which can initiate transcription.

The enzyme catalyses RNA(n) + a ribonucleoside 5'-triphosphate = RNA(n+1) + diphosphate. In terms of biological role, promotes RNA polymerase assembly. Latches the N- and C-terminal regions of the beta' subunit thereby facilitating its interaction with the beta and alpha subunits. This chain is DNA-directed RNA polymerase subunit omega, found in Shewanella denitrificans (strain OS217 / ATCC BAA-1090 / DSM 15013).